A 310-amino-acid chain; its full sequence is Ribonuclease Z (310 aa).

Zn(2+)-binding residues include histidine 63, histidine 65, aspartate 67, histidine 68, histidine 141, aspartate 212, and histidine 270. Catalysis depends on aspartate 67, which acts as the Proton acceptor.

It belongs to the RNase Z family. In terms of assembly, homodimer. Zn(2+) is required as a cofactor.

The enzyme catalyses Endonucleolytic cleavage of RNA, removing extra 3' nucleotides from tRNA precursor, generating 3' termini of tRNAs. A 3'-hydroxy group is left at the tRNA terminus and a 5'-phosphoryl group is left at the trailer molecule.. Its function is as follows. Zinc phosphodiesterase, which displays some tRNA 3'-processing endonuclease activity. Probably involved in tRNA maturation, by removing a 3'-trailer from precursor tRNA. The chain is Ribonuclease Z from Limosilactobacillus fermentum (strain NBRC 3956 / LMG 18251) (Lactobacillus fermentum).